We begin with the raw amino-acid sequence, 329 residues long: Glycerol-3-phosphate dehydrogenase [NAD(P)+] (329 aa).

Serine 10, tryptophan 11, arginine 31, and lysine 105 together coordinate NADPH. Residues lysine 105, glycine 134, and serine 136 each contribute to the sn-glycerol 3-phosphate site. Residue alanine 138 participates in NADPH binding. Sn-glycerol 3-phosphate-binding residues include lysine 189, aspartate 242, serine 252, arginine 253, and asparagine 254. Lysine 189 functions as the Proton acceptor in the catalytic mechanism. An NADPH-binding site is contributed by arginine 253. Residues valine 277 and glutamate 279 each contribute to the NADPH site.

It belongs to the NAD-dependent glycerol-3-phosphate dehydrogenase family.

The protein localises to the cytoplasm. It catalyses the reaction sn-glycerol 3-phosphate + NAD(+) = dihydroxyacetone phosphate + NADH + H(+). The catalysed reaction is sn-glycerol 3-phosphate + NADP(+) = dihydroxyacetone phosphate + NADPH + H(+). It participates in membrane lipid metabolism; glycerophospholipid metabolism. Its function is as follows. Catalyzes the reduction of the glycolytic intermediate dihydroxyacetone phosphate (DHAP) to sn-glycerol 3-phosphate (G3P), the key precursor for phospholipid synthesis. The chain is Glycerol-3-phosphate dehydrogenase [NAD(P)+] from Neisseria meningitidis serogroup C (strain 053442).